A 434-amino-acid chain; its full sequence is MVGARAGRVPAAAAAAAAVLIVAACVFSSLAGAAAAAEVVGGAAQGNTERISGSAGDVLEDNPVGRLKVFVYDLPSKYNKRIVAKDPRCLNHMFAAEIFMHRFLLSSAVRTLNPEQADWFYAPVYTTCDLTHAGLPLPFKSPRMMRSAIQFLSRKWPFWNRTDGADHFFVVPHDFGACFHYQEEKAIERGILPLLRRATLVQTFGQKNHVCLKEGSITIPPYAPPQKMQAHLIPPDTPRSIFVYFRGLFYDNGNDPEGGYYARGARASLWENFKNNPLFDISTEHPATYYEDMQRSVFCLCPLGWAPWSPRLVEAVVFGCIPVIIADDIVLPFADAIPWDEIGVFVDEEDVPRLDSILTSIPIDDILRKQRLLANPSMKQAMLFPQPAQPRDAFHQILNGLARKLPHPDSVYLKPGEKHLNWTAGPVADLKPWK.

At Met-1–Pro-10 the chain is on the cytoplasmic side. The chain crosses the membrane as a helical; Signal-anchor for type II membrane protein span at residues Ala-11–Ala-31. The Lumenal segment spans residues Gly-32 to Lys-434. Residues Asn-160 and Asn-421 are each glycosylated (N-linked (GlcNAc...) asparagine).

This sequence belongs to the glycosyltransferase 47 family.

It is found in the golgi apparatus membrane. In terms of biological role, involved in the synthesis of glucuronoxylan hemicellulose in secondary cell walls. The sequence is that of Probable glucuronosyltransferase Os02g0520750 from Oryza sativa subsp. japonica (Rice).